A 68-amino-acid chain; its full sequence is uncharacterized protein (68 aa).

To B.subtilis XtrA.

This is an uncharacterized protein from Bacillus subtilis (strain 168).